The chain runs to 1186 residues: Pesticidal crystal protein Cry14Aa (1186 aa).

This sequence belongs to the delta endotoxin family.

Its function is as follows. Promotes colloidosmotic lysis by binding to the midgut epithelial cells of insects. The protein is Pesticidal crystal protein Cry14Aa (cry14Aa) of Bacillus thuringiensis subsp. sotto.